The chain runs to 140 residues: Large ribosomal subunit protein uL11 (140 aa).

Belongs to the universal ribosomal protein uL11 family. As to quaternary structure, part of the ribosomal stalk of the 50S ribosomal subunit. Interacts with L10 and the large rRNA to form the base of the stalk. L10 forms an elongated spine to which L12 dimers bind in a sequential fashion forming a multimeric L10(L12)X complex. In terms of processing, one or more lysine residues are methylated.

Functionally, forms part of the ribosomal stalk which helps the ribosome interact with GTP-bound translation factors. The polypeptide is Large ribosomal subunit protein uL11 (Heliobacterium modesticaldum (strain ATCC 51547 / Ice1)).